Reading from the N-terminus, the 1238-residue chain is Kinesin-related protein 10 (1238 aa).

In terms of domain architecture, Kinesin motor spans serine 16–isoleucine 374. Residue glycine 116–threonine 123 coordinates ATP. Residues asparagine 417–serine 436 show a composition bias toward low complexity. Positions asparagine 417–asparagine 503 are disordered. Residues phenylalanine 437 to tyrosine 464 are compositionally biased toward polar residues. A compositionally biased stretch (acidic residues) spans aspartate 468–aspartate 497. Residues threonine 527–serine 602 are a coiled coil. Composition is skewed to low complexity over residues asparagine 726–asparagine 795, leucine 918–leucine 934, and asparagine 961–proline 971. Disordered stretches follow at residues asparagine 726 to arginine 802, glutamate 891 to proline 971, threonine 1134 to threonine 1156, and alanine 1191 to lysine 1238. Residues alanine 1191–valine 1203 are compositionally biased toward polar residues. The span at proline 1215–threonine 1228 shows a compositional bias: low complexity. Over residues threonine 1229–lysine 1238 the composition is skewed to polar residues.

It belongs to the TRAFAC class myosin-kinesin ATPase superfamily. Kinesin family.

It is found in the cytoplasm. The protein resides in the cytoskeleton. Its function is as follows. Microtubule-associated force-producing protein that plays a role in organelle transport. Its motor activity is directed toward the microtubule's plus end. Cooperates with kif8 and dynein to organize interphase microtubules. The chain is Kinesin-related protein 10 (kif10) from Dictyostelium discoideum (Social amoeba).